A 230-amino-acid chain; its full sequence is MVKQERKIQTSSTKKEMPLSSSPSSSSSSSSSSSSSSCKNKNKKSKIKKYKGVRMRSWGSWVSEIRAPNQKTRIWLGSYSTAEAAARAYDVALLCLKGPQANLNFPTSSSSHHLLDNLLDENTLLSPKSIQRVAAQAANSFNHFAPTSSAVSSPSDHDHHHDDGMQSLMGSFVDNHVSLMDSTSSWYDDHNGMFLFDNGAPFNYSPQLNSTTMLDEYFYEDADIPLWSFN.

Positions 1-17 (MVKQERKIQTSSTKKEM) are enriched in basic and acidic residues. The disordered stretch occupies residues 1–51 (MVKQERKIQTSSTKKEMPLSSSPSSSSSSSSSSSSSSCKNKNKKSKIKKYK). Positions 20–39 (SSSPSSSSSSSSSSSSSSCK) are enriched in low complexity. The segment covering 40-51 (NKNKKSKIKKYK) has biased composition (basic residues). The AP2/ERF DNA-binding region spans 49 to 106 (KYKGVRMRSWGSWVSEIRAPNQKTRIWLGSYSTAEAAARAYDVALLCLKGPQANLNFP).

This sequence belongs to the AP2/ERF transcription factor family. ERF subfamily. In terms of tissue distribution, expressed cotyledons, ovules and seeds of immature siliques.

The protein resides in the nucleus. Transcriptional activator involved in the regulation of plant development and tolerance to abiotic stresses. Involved in salt and osmotic stress response pathways. May be regulated by the stress-related genes RD29A, RD22, DREB1A or P5CS during stress response. Binds to the GCC-box pathogenesis-related promoter element. May be involved in the regulation of gene expression by stress factors and by components of stress signal transduction pathways. The polypeptide is Ethylene-responsive transcription factor ERF012 (ERF012) (Arabidopsis thaliana (Mouse-ear cress)).